The primary structure comprises 1005 residues: Sorbin and SH3 domain-containing protein 1 homolog (1005 aa).

Disordered stretches follow at residues 1 to 31 (MMHH…PAAD), 61 to 86 (LDMK…STPS), 99 to 153 (YVDP…PHSA), 243 to 292 (NELK…FNSE), 386 to 409 (FEEK…FKND), 427 to 475 (TTKN…TAAA), and 542 to 622 (MHRK…SNEE). The span at 11-25 (NLANSSEPQQPSGQY) shows a compositional bias: polar residues. The segment covering 260-269 (VMTSSTENLK) has biased composition (polar residues). Residues 270–279 (NGNNQQNQQP) are compositionally biased toward low complexity. A compositionally biased stretch (polar residues) spans 392 to 409 (RSPMTSTPSYKEQGFKND). The span at 448–475 (SDTYPVSSSTTSTWPSHTTTPTTTTAAA) shows a compositional bias: low complexity. Positions 499-567 (VMSTNMDEPI…FINPSNVTDG (69 aa)) constitute a SoHo domain. The span at 544–557 (RKGEDGSNEGKEQH) shows a compositional bias: basic and acidic residues. Polar residues predominate over residues 559-589 (INPSNVTDGIGRTTPTASNLGRSRENLSFNQ). A coiled-coil region spans residues 610–642 (YNNQERVKQSNEEELLRLKAEKLAEELRKEKER). SH3 domains lie at 683 to 742 (QPVM…INTG), 745 to 805 (GDSQ…PIEQ), and 946 to 1005 (KGSE…VKRH).

May interact with deb-1. In terms of tissue distribution, expressed in body wall muscles, muscle arm attachment sites at the nerve ring, all non-striated muscles, and distal tip cells of the gonad. Highly expressed in the origins and insertions of the vulval and anal depressor muscles and the spicule-associated and diagonal muscles of the male tail. Expressed in small puncta throughout the uterus, stomatointestinal muscle and proximal gonadal sheath tissues. Not expressed in the pharynx.

It is found in the cell junction. It localises to the adherens junction. The protein resides in the cell membrane. The protein localises to the focal adhesion. In terms of biological role, required for organization of sarcomeres in body wall muscles and for maintaining normal mitochondrial position in myocytes. The sequence is that of Sorbin and SH3 domain-containing protein 1 homolog from Caenorhabditis elegans.